Here is a 244-residue protein sequence, read N- to C-terminus: Adenosylcobinamide-GDP ribazoletransferase (244 aa).

Helical transmembrane passes span 33-53 (WFAV…WLGA), 57-77 (PWLA…GLHL), 109-129 (FAVI…MLAV), 132-152 (GVGW…AVWW), and 176-196 (FWLS…VLLL).

Belongs to the CobS family. The cofactor is Mg(2+).

It localises to the cell inner membrane. It catalyses the reaction alpha-ribazole + adenosylcob(III)inamide-GDP = adenosylcob(III)alamin + GMP + H(+). It carries out the reaction alpha-ribazole 5'-phosphate + adenosylcob(III)inamide-GDP = adenosylcob(III)alamin 5'-phosphate + GMP + H(+). It participates in cofactor biosynthesis; adenosylcobalamin biosynthesis; adenosylcobalamin from cob(II)yrinate a,c-diamide: step 7/7. In terms of biological role, joins adenosylcobinamide-GDP and alpha-ribazole to generate adenosylcobalamin (Ado-cobalamin). Also synthesizes adenosylcobalamin 5'-phosphate from adenosylcobinamide-GDP and alpha-ribazole 5'-phosphate. This is Adenosylcobinamide-GDP ribazoletransferase from Laribacter hongkongensis (strain HLHK9).